Consider the following 568-residue polypeptide: Urease subunit alpha (568 aa).

Residues 130 to 568 (GGIDTHIHFI…LPMAQRYFLF (439 aa)) enclose the Urease domain. Positions 135, 137, and 218 each coordinate Ni(2+). Lys218 carries the post-translational modification N6-carboxylysine. A substrate-binding site is contributed by His220. 2 residues coordinate Ni(2+): His247 and His273. The active-site Proton donor is the His321. Asp361 contacts Ni(2+).

It belongs to the metallo-dependent hydrolases superfamily. Urease alpha subunit family. As to quaternary structure, heterotrimer of UreA (gamma), UreB (beta) and UreC (alpha) subunits. Three heterotrimers associate to form the active enzyme. It depends on Ni cation as a cofactor. In terms of processing, carboxylation allows a single lysine to coordinate two nickel ions.

The protein localises to the cytoplasm. The enzyme catalyses urea + 2 H2O + H(+) = hydrogencarbonate + 2 NH4(+). The protein operates within nitrogen metabolism; urea degradation; CO(2) and NH(3) from urea (urease route): step 1/1. This Burkholderia pseudomallei (strain 668) protein is Urease subunit alpha.